Here is a 398-residue protein sequence, read N- to C-terminus: Bifunctional enzyme IspD/IspF (398 aa).

The tract at residues 1 to 234 (MAKSQRTAVV…ARLAAQLGDI (234 aa)) is 2-C-methyl-D-erythritol 4-phosphate cytidylyltransferase. Positions 235–398 (RTGTGYDVHA…LPFNEKTWSV (164 aa)) are 2-C-methyl-D-erythritol 2,4-cyclodiphosphate synthase. The a divalent metal cation site is built by aspartate 241 and histidine 243. 4-CDP-2-C-methyl-D-erythritol 2-phosphate-binding positions include 241–243 (DVH) and 267–268 (HS). An a divalent metal cation-binding site is contributed by histidine 275. 4-CDP-2-C-methyl-D-erythritol 2-phosphate is bound by residues 289–291 (DIG), 365–368 (TTSE), phenylalanine 372, and arginine 375.

In the N-terminal section; belongs to the IspD/TarI cytidylyltransferase family. IspD subfamily. This sequence in the C-terminal section; belongs to the IspF family. A divalent metal cation is required as a cofactor.

It catalyses the reaction 2-C-methyl-D-erythritol 4-phosphate + CTP + H(+) = 4-CDP-2-C-methyl-D-erythritol + diphosphate. It carries out the reaction 4-CDP-2-C-methyl-D-erythritol 2-phosphate = 2-C-methyl-D-erythritol 2,4-cyclic diphosphate + CMP. It functions in the pathway isoprenoid biosynthesis; isopentenyl diphosphate biosynthesis via DXP pathway; isopentenyl diphosphate from 1-deoxy-D-xylulose 5-phosphate: step 2/6. It participates in isoprenoid biosynthesis; isopentenyl diphosphate biosynthesis via DXP pathway; isopentenyl diphosphate from 1-deoxy-D-xylulose 5-phosphate: step 4/6. Functionally, bifunctional enzyme that catalyzes the formation of 4-diphosphocytidyl-2-C-methyl-D-erythritol from CTP and 2-C-methyl-D-erythritol 4-phosphate (MEP) (IspD), and catalyzes the conversion of 4-diphosphocytidyl-2-C-methyl-D-erythritol 2-phosphate (CDP-ME2P) to 2-C-methyl-D-erythritol 2,4-cyclodiphosphate (ME-CPP) with a corresponding release of cytidine 5-monophosphate (CMP) (IspF). This chain is Bifunctional enzyme IspD/IspF, found in Bradyrhizobium diazoefficiens (strain JCM 10833 / BCRC 13528 / IAM 13628 / NBRC 14792 / USDA 110).